Here is a 45-residue protein sequence, read N- to C-terminus: Large ribosomal subunit protein bL34 (45 aa).

The tract at residues 23-45 (ETPGGKKVLSARRAKGRKNLIAK) is disordered. Basic residues predominate over residues 31–45 (LSARRAKGRKNLIAK).

The protein belongs to the bacterial ribosomal protein bL34 family.

The chain is Large ribosomal subunit protein bL34 from Elusimicrobium minutum (strain Pei191).